The chain runs to 1170 residues: Glucose transport transcription regulator RGT1 (1170 aa).

The segment covering 1 to 22 has biased composition (polar residues); sequence MNELNTVSTNSSDSTKDGGTSN. Disordered stretches follow at residues 1–47 and 77–149; these read MNEL…SRAC and SFDR…SNSV. Residues 47-76 constitute a DNA-binding region (zn(2)-C6 fungal-type); sequence CDQCRKKKIKCDYKDEKGVCSNCQRNGDRC. Positions 99–108 are enriched in basic and acidic residues; it reads RTNEIQDHNN. Positions 113-138 are enriched in low complexity; that stretch reads NTFDNSNNTLNNNTGNSGDNGINSNT. Residues 139–149 are compositionally biased toward polar residues; the sequence is VPSTPSRSNSV. Phosphoserine occurs at positions 202, 205, 208, and 229. Disordered stretches follow at residues 226-254, 269-288, 293-323, 384-506, and 944-977; these read VQQS…SASG, APTD…IPSL, SNSL…LQQG, AQQT…HPMT, and NYRP…SAAP. Positions 239-250 are enriched in low complexity; it reads SGNANGSVTGSG. The span at 271–280 shows a compositional bias: basic and acidic residues; it reads TDDHNGEQTR. Phosphoserine is present on residues Ser283 and Ser284. Low complexity-rich tracts occupy residues 293 to 302, 309 to 323, and 385 to 397; these read SNSLLLGGQP, QQSQ…LQQG, and QQTQ…QVPQ. Phosphoserine is present on residues Ser410 and Ser414. The span at 411 to 422 shows a compositional bias: polar residues; that stretch reads APVSVTLSTDRL. Residues 424–444 show a composition bias toward low complexity; sequence GNENNNGEINNNNGSNNSGSS. Residues 445-457 show a composition bias toward polar residues; that stretch reads KDTSQHSQESVTT. Basic residues predominate over residues 473 to 488; sequence STKKRRKSYVSKKTKP. Positions 493–506 are enriched in polar residues; the sequence is SISITSKDSAHPMT. At Ser1130 the chain carries Phosphoserine.

The protein belongs to the EDS1/RGT1 family. Post-translationally, glucose-induced phosphorylation regulates the DNA-binding activity. Hyperphosphorylation in cells growing on high levels of glucose does prevents DNA-binding and dephosphorylation restores DNA-binding ability.

It is found in the nucleus. Its subcellular location is the cytoplasm. Functionally, glucose-responsive transcription factor that regulates expression of several glucose transporter (HXT) genes in response to glucose. In the absence of glucose, it functions as a transcriptional repressor, whereas high concentrations of glucose cause it to function as a transcriptional activator. In cells growing on low levels of glucose, has a neutral role, neither repressing nor activating transcription. Binds the consensus binding site sequence 5'-CGGANNA-3', of which multiple copies are present in all HXT promoters regulated by RGT1. The sequence is that of Glucose transport transcription regulator RGT1 (RGT1) from Saccharomyces cerevisiae (strain JAY291) (Baker's yeast).